The following is a 686-amino-acid chain: Pollen receptor-like kinase 5 (686 aa).

An N-terminal signal peptide occupies residues 1–39 (MRNWEDPFTLACNTALKKNLPSCIFIIIFISVLCPVAMS). At 40 to 283 (QVVVPDSDAD…GKKAGSFYTL (244 aa)) the chain is on the extracellular side. N-linked (GlcNAc...) asparagine glycosylation is present at N60. LRR repeat units follow at residues 112 to 135 (MKNL…VKRF), 136 to 159 (TSLK…AFLG), 161 to 184 (PLLK…LASL), 185 to 208 (PMLL…QQKD), and 210 to 230 (KLAS…LRNM). The helical transmembrane segment at 284–304 (AIILIVIGIILVIIALVFCFV) threads the bilayer. At 305 to 686 (QSRRRNFLSA…DDDFGFSMNR (382 aa)) the chain is on the cytoplasmic side. Residues 328 to 339 (NYHQSTNKNNKP) show a composition bias toward polar residues. The tract at residues 328-355 (NYHQSTNKNNKPAESVNHTRRGSMPDPG) is disordered. The 274-residue stretch at 375–648 (RASAEVLGSG…REVVEMVEML (274 aa)) folds into the Protein kinase domain. A Phosphoserine modification is found at S377. ATP is bound by residues 381–389 (LGSGTFGAS) and K403. A phosphoserine mark is found at S455 and S458. Position 472 is a phosphothreonine (T472). Position 542 is a phosphotyrosine (Y542). Phosphoserine is present on S545.

The protein belongs to the protein kinase superfamily. Ser/Thr protein kinase family. In terms of assembly, interacts with the GRI peptide. As to expression, expressed in pollen and/or in flowers. Detected at low levels in leaves.

It is found in the cell membrane. The enzyme catalyses L-seryl-[protein] + ATP = O-phospho-L-seryl-[protein] + ADP + H(+). It catalyses the reaction L-threonyl-[protein] + ATP = O-phospho-L-threonyl-[protein] + ADP + H(+). In terms of biological role, receptor-like kinase involved in the control of pollen germination and pollen tube polar growth. The extracellular domain serves as a sensor for peptides derived from GRI. May act as a downstream element for ROS-dependent cell death induced by GRI. This chain is Pollen receptor-like kinase 5, found in Arabidopsis thaliana (Mouse-ear cress).